Consider the following 102-residue polypeptide: Acid shock protein (102 aa).

Positions 1-21 are cleaved as a signal peptide; the sequence is MKKVLALVVAAAMGLSSAAFA. Residues 22 to 41 show a composition bias toward low complexity; the sequence is AETATTPAPTATTTKAAPAK. Residues 22 to 58 constitute a propeptide that is removed on maturation; it reads AETATTPAPTATTTKAAPAKTTHHKKQHKAAPAQKAQ. The tract at residues 22 to 102 is disordered; that stretch reads AETATTPAPT…PAKPAAQPAA (81 aa). Over residues 80 to 90 the composition is skewed to basic residues; sequence AAKKHAGKHSH. The segment covering 91-102 has biased composition (low complexity); sequence QQPAKPAAQPAA.

Belongs to the Asr family. In terms of processing, proteolytic processing gives rise to the active protein.

The protein localises to the periplasm. In terms of biological role, required for growth and/or survival at acidic conditions. This chain is Acid shock protein, found in Escherichia coli (strain 55989 / EAEC).